Here is a 920-residue protein sequence, read N- to C-terminus: Disintegrin and metalloproteinase domain-containing protein 19 (920 aa).

An N-terminal signal peptide occupies residues Met1–Cys26. Residues Glu27–Arg204 constitute a propeptide that is removed on maturation. Residues Glu27–Ser703 are Extracellular-facing. Residues Ser131–Gly138 carry the Cysteine switch motif. Cys133 contacts Zn(2+). Asn145 carries N-linked (GlcNAc...) asparagine glycosylation. The Peptidase M12B domain maps to Lys211–Pro409. 3 disulfides stabilise this stretch: Cys321/Cys404, Cys361/Cys388, and Cys362/Cys371. His346 contacts Zn(2+). Residue Glu347 is part of the active site. Zn(2+) contacts are provided by His350 and His356. Residues Gly417–Asp503 form the Disintegrin domain. N-linked (GlcNAc...) asparagine glycans are attached at residues Asn445 and Asn448. Cys475 and Cys495 are disulfide-bonded. The N-linked (GlcNAc...) asparagine glycan is linked to Asn649. Residues Glu654–Asn686 enclose the EGF-like domain. Cystine bridges form between Cys658/Cys668, Cys662/Cys674, and Cys676/Cys685. Residues Val704–Leu724 traverse the membrane as a helical segment. Residues Cys725–Ile920 lie on the Cytoplasmic side of the membrane. Positions Ser755–Ile920 are disordered. A compositionally biased stretch (polar residues) spans Phe767 to Glu783. Over residues Ala825–Arg834 the composition is skewed to basic and acidic residues. The SH3-binding signature appears at Arg835–Pro846. Pro residues-rich tracts occupy residues Arg835 to Pro846 and Thr888 to Lys903.

In terms of assembly, interacts with SH3PXD2A. The cofactor is Zn(2+). In terms of processing, the precursor is cleaved by a furin endopeptidase. In terms of tissue distribution, widely expressed, with the highest expression in bone, heart and lung, followed by brain and spleen and relatively low expression in liver, skeletal muscle, kidney and testis. In bone, primarily expressed in cell of the osteoblast lineage and not detected in mature osteoclasts.

It localises to the membrane. Functionally, participates in the proteolytic processing of beta-type neuregulin isoforms which are involved in neurogenesis and synaptogenesis, suggesting a regulatory role in glial cell. Also cleaves alpha-2 macroglobulin. May be involved in osteoblast differentiation and/or osteoblast activity in bone. In Mus musculus (Mouse), this protein is Disintegrin and metalloproteinase domain-containing protein 19 (Adam19).